A 474-amino-acid polypeptide reads, in one-letter code: MGPKFGTSGLRGLATELVGSVSALYATAFSRMLLDRGRVAPGATVLVGRDFRDSSSEIAAICMAALARAGMVPVDCGGLPTPALALYGRKLGAASLMITGSHIPADRNGIKFYLPDGEINKADEQAITALAEQLSADADATRVECGRGADHSSEATDFYIQRYETLLPKSGLKGLKIGLYQHSSVARDILTTILEGHGANVVPVGRSEVFIPVDTEAISAATCKMLAAWAKEFAFDAIVSSDADADRPLLTDETGTPLRGDLLGLICARLLEAKLIATPITSNSGIEAASGVEVVRTRVGSPYVIAAMTEAVARGKQRVMGFEANGGVMLGSNFSFGGASLPALPTRDCVLPIIAALHMAVEAKTPLSGIVAMHRLPVALSGRIENYPFDRSDALVAFLKASKANVSHLFSRIGRVAGTDDVDGLRLTFEGGRILHIRPSGNAPELRCYVEADDPDAAEHLLAQGLAVLNSSMV.

Catalysis depends on Ser-101, which acts as the Phosphoserine intermediate. The Mg(2+) site is built by Ser-101, Asp-242, Asp-244, and Asp-246.

This sequence belongs to the phosphohexose mutase family. It depends on Mg(2+) as a cofactor.

The enzyme catalyses alpha-D-mannose 1-phosphate = D-mannose 6-phosphate. The sequence is that of Phosphomannomutase (noeK) from Sinorhizobium fredii (strain NBRC 101917 / NGR234).